Consider the following 634-residue polypeptide: 1-deoxy-D-xylulose-5-phosphate synthase (634 aa).

Thiamine diphosphate contacts are provided by residues histidine 77 and 118-120 (GHA). Mg(2+) is bound at residue aspartate 149. Residues 150–151 (AS), asparagine 178, tyrosine 289, and glutamate 371 each bind thiamine diphosphate. Asparagine 178 contacts Mg(2+).

This sequence belongs to the transketolase family. DXPS subfamily. In terms of assembly, homodimer. It depends on Mg(2+) as a cofactor. Requires thiamine diphosphate as cofactor.

The enzyme catalyses D-glyceraldehyde 3-phosphate + pyruvate + H(+) = 1-deoxy-D-xylulose 5-phosphate + CO2. The protein operates within metabolic intermediate biosynthesis; 1-deoxy-D-xylulose 5-phosphate biosynthesis; 1-deoxy-D-xylulose 5-phosphate from D-glyceraldehyde 3-phosphate and pyruvate: step 1/1. Functionally, catalyzes the acyloin condensation reaction between C atoms 2 and 3 of pyruvate and glyceraldehyde 3-phosphate to yield 1-deoxy-D-xylulose-5-phosphate (DXP). The polypeptide is 1-deoxy-D-xylulose-5-phosphate synthase (Leptospira interrogans serogroup Icterohaemorrhagiae serovar copenhageni (strain Fiocruz L1-130)).